The chain runs to 105 residues: Large ribosomal subunit protein eL36 (105 aa).

Belongs to the eukaryotic ribosomal protein eL36 family. In terms of assembly, component of the large ribosomal subunit.

The protein localises to the cytoplasm. It is found in the cytosol. Its function is as follows. Component of the large ribosomal subunit. The ribosome is a large ribonucleoprotein complex responsible for the synthesis of proteins in the cell. This is Large ribosomal subunit protein eL36 (RPL36) from Gallus gallus (Chicken).